The following is a 241-amino-acid chain: GTP cyclohydrolase 1 type 2 homolog (241 aa).

H62, H63, D101, H207, and E211 together coordinate a divalent metal cation.

This sequence belongs to the GTP cyclohydrolase I type 2/NIF3 family. As to quaternary structure, homohexamer.

This chain is GTP cyclohydrolase 1 type 2 homolog, found in Campylobacter jejuni subsp. jejuni serotype O:2 (strain ATCC 700819 / NCTC 11168).